The primary structure comprises 433 residues: MEPRLGPKAAALHLGWPFLLLWVSGLSYSVSSPASPSPSPVSRVRTSYNLGKTFLGLDKCNACIGTSICKKFFKEEIRFDNGLALHLGPPPDDLPSYSANYSDDFKTWRPVEISRLVSKQQNKISDGRICASAAAPKTCSIERVLRKTGRFQKWLQAKRLTPDLVRGLSSPLLRCPSQRLLDRVVRRYAEVADAGSIFMDHFTDRDKLRLLYTLAVNTHPVLLQIFPGAEGWPLPQYLGSCGRFLVSTSTSPLQEFYGAPPDQAADLAYQLLGVLESLRSNDLNYFFYFTHVDADMFGIFNNGHLFIRDASALGVIDRQEGSQAASGAGDNKDIFSCLVSGCQTKLPSCDTIPEKQNLVLVCSQVLPLLLQAKFPSPVQEEIDAELTRCADGTRPDPEVLGAASRLKDILRPLRTCDPRFAYRYPDCKYDDKF.

Residues 1-29 (MEPRLGPKAAALHLGWPFLLLWVSGLSYS) form the signal peptide. Asparagine 100 is a glycosylation site (N-linked (GlcNAc...) asparagine).

The protein belongs to the DIPK family.

It localises to the secreted. In Bos taurus (Bovine), this protein is Divergent protein kinase domain 2B (DIPK2B).